The chain runs to 1307 residues: Cellulose synthase 2 operon protein C (1307 aa).

The first 55 residues, 1 to 55, serve as a signal peptide directing secretion; sequence MTRPRGPAPRDGAAWRRDPARRVLLRDAVRGREGGLRLACAVMAGLIVSGGVACA. 9 TPR repeats span residues 97–130, 270–303, 339–372, 374–406, 458–491, 493–525, 528–561, 754–787, and 788–821; these read LELLLDQGYYWLGQHNLGKAHETIQRALSIEPDN, LDGLRALARSNVSAQIRSDAVAAWRDALLWEPIT, AANDRQQGYALLSRHMLDAAAREFHRAVDIDPHD, DALGGLGLVAQARQQPALARQYFLQAMQAGPDA, LTVLSLQAALARRQGDTADAVRLYREVVRRAPRD, GALFSLGALDVQVGDATEAADILTRLQRLAPAM, RLEAMMLSAQADRAGDDDGRIALLRRAQALDPDD, IGLAIMTADGFDRYGRTAQAAQVLAPVLRAHPDS, and VEAHLAMGRVYQTRNMATRALEEDETALRLKPAN.

The protein belongs to the AcsC/BcsC family.

The protein localises to the cell outer membrane. It functions in the pathway glycan metabolism; bacterial cellulose biosynthesis. Functionally, required for maximal bacterial cellulose synthesis. In Komagataeibacter xylinus (Gluconacetobacter xylinus), this protein is Cellulose synthase 2 operon protein C (bcsCII).